Consider the following 820-residue polypeptide: Probable ATP-dependent RNA helicase DDX23 (820 aa).

Positions 1–42 are enriched in basic and acidic residues; sequence MAGELADKKDRDASPSKEERKRSRTPDRERDRDRDRKSSPSK. The interval 1-244 is disordered; that stretch reads MAGELADKKD…QKIREEKDKS (244 aa). A phosphoserine mark is found at Ser14 and Ser16. Residues 43–65 show a composition bias toward basic residues; the sequence is DRKRHRSRDRRRGGSRSRSRSRS. The span at 66–105 shows a compositional bias: basic and acidic residues; that stretch reads KSAERERRHKERERDKERDRNKKDRDRDKDGHRRDKDRKR. A phosphoserine mark is found at Ser107 and Ser109. Composition is skewed to basic and acidic residues over residues 112–137, 147–226, and 233–244; these read RGKDFKSRKDRDSKKDEEDEHGDKKP, LLAK…RETN, and GRQKIREEKDKS. Residues 391–419 carry the Q motif motif; it reads RSWKDSSLPPHILEVIDKCGYKEPTPIQR. Positions 422–627 constitute a Helicase ATP-binding domain; that stretch reads IPIGLQNRDI…RSYLRRPAVV (206 aa). 435 to 442 is an ATP binding site; sequence AETGSGKT. Positions 549–552 match the DEAD box motif; it reads DEAD. The 149-residue stretch at 651 to 799 folds into the Helicase C-terminal domain; the sequence is KRKKLLAILE…SCPPELANHP (149 aa). Glycyl lysine isopeptide (Lys-Gly) (interchain with G-Cter in SUMO2) cross-links involve residues Lys686 and Lys811.

This sequence belongs to the DEAD box helicase family. DDX23/PRP28 subfamily. The phosphorylated form (by SRPK2) is a component of the U4/U6-U5 tri-snRNP complex composed of the U4, U6 and U5 snRNAs and at least PRPF3, PRPF4, PRPF6, PRPF8, PRPF31, SNRNP200, TXNL4A, WDR57, SNRNP40, DDX23, CD2BP2, PPIH, SNU13, EFTUD2, SART1 and USP39. Identified in the spliceosome C complex. Interacts with ERBB4. Interacts with ERCC6. In vitro phosphorylated by CLK1 and U1 snRNP-associated protein kinase. Phosphorylated by SRPK2 and this phosphorylation is required for its association with the tri-snRNP (U4/U6-U5 tri-small nuclear ribonucleoproteins) and subsequent spliceosomal B complex formation. May be phosphorylated by SRPK2 on Ser residues in the SR domain; the phosphorylation is required for the removal of inappropriate R-loops during transcription.

Its subcellular location is the nucleus. It localises to the chromosome. The catalysed reaction is ATP + H2O = ADP + phosphate + H(+). In terms of biological role, involved in pre-mRNA splicing and its phosphorylated form (by SRPK2) is required for spliceosomal B complex formation. Independently of its spliceosome formation function, required for the suppression of incorrect R-loops formed during transcription; R-loops are composed of a DNA:RNA hybrid and the associated non-template single-stranded DNA. In Homo sapiens (Human), this protein is Probable ATP-dependent RNA helicase DDX23.